A 526-amino-acid polypeptide reads, in one-letter code: Peptide chain release factor 3 (526 aa).

The tr-type G domain occupies 8–277; sequence GKRRTFAIIS…GLTDWAPAPQ (270 aa). Residues 17-24, 85-89, and 139-142 contribute to the GTP site; these read SHPDAGKT, DTPGH, and NKLD.

It belongs to the TRAFAC class translation factor GTPase superfamily. Classic translation factor GTPase family. PrfC subfamily.

It localises to the cytoplasm. Functionally, increases the formation of ribosomal termination complexes and stimulates activities of RF-1 and RF-2. It binds guanine nucleotides and has strong preference for UGA stop codons. It may interact directly with the ribosome. The stimulation of RF-1 and RF-2 is significantly reduced by GTP and GDP, but not by GMP. The protein is Peptide chain release factor 3 of Aliivibrio fischeri (strain ATCC 700601 / ES114) (Vibrio fischeri).